A 419-amino-acid chain; its full sequence is UDP-N-acetylglucosamine 1-carboxyvinyltransferase (419 aa).

Position 22-23 (22-23 (KN)) interacts with phosphoenolpyruvate. R93 contributes to the UDP-N-acetyl-alpha-D-glucosamine binding site. C117 acts as the Proton donor in catalysis. The residue at position 117 (C117) is a 2-(S-cysteinyl)pyruvic acid O-phosphothioketal. UDP-N-acetyl-alpha-D-glucosamine contacts are provided by D307 and I329.

It belongs to the EPSP synthase family. MurA subfamily.

It localises to the cytoplasm. It catalyses the reaction phosphoenolpyruvate + UDP-N-acetyl-alpha-D-glucosamine = UDP-N-acetyl-3-O-(1-carboxyvinyl)-alpha-D-glucosamine + phosphate. It functions in the pathway cell wall biogenesis; peptidoglycan biosynthesis. Functionally, cell wall formation. Adds enolpyruvyl to UDP-N-acetylglucosamine. This Shewanella denitrificans (strain OS217 / ATCC BAA-1090 / DSM 15013) protein is UDP-N-acetylglucosamine 1-carboxyvinyltransferase.